Here is a 482-residue protein sequence, read N- to C-terminus: ATP synthase subunit beta (482 aa).

162-169 (GGAGVGKT) provides a ligand contact to ATP.

The protein belongs to the ATPase alpha/beta chains family. In terms of assembly, F-type ATPases have 2 components, CF(1) - the catalytic core - and CF(0) - the membrane proton channel. CF(1) has five subunits: alpha(3), beta(3), gamma(1), delta(1), epsilon(1). CF(0) has four main subunits: a(1), b(1), b'(1) and c(9-12).

It localises to the cellular thylakoid membrane. The catalysed reaction is ATP + H2O + 4 H(+)(in) = ADP + phosphate + 5 H(+)(out). Produces ATP from ADP in the presence of a proton gradient across the membrane. The catalytic sites are hosted primarily by the beta subunits. This chain is ATP synthase subunit beta, found in Nostoc sp. (strain PCC 7120 / SAG 25.82 / UTEX 2576).